The following is a 260-amino-acid chain: Chloride intracellular channel Clic (260 aa).

Residues 42 to 66 (FCQEYFMDLYLLAELKTISLKVTTV) form a helical membrane-spanning segment.

It belongs to the chloride channel CLIC family. As to expression, expressed in cardiac tubes.

The protein resides in the mitochondrion. Its subcellular location is the membrane. Functionally, might insert into membranes and form chloride ion channels. Channel activity depends on the pH. May play a role in ethanol sensitivity. The protein is Chloride intracellular channel Clic of Drosophila melanogaster (Fruit fly).